Consider the following 253-residue polypeptide: Transmembrane protein 51 (253 aa).

The next 2 membrane-spanning stretches (helical) occupy residues 17-37 (IGLG…VPGF) and 65-85 (VAYV…CLSI). 2 disordered regions span residues 93–133 (QGED…YVPS) and 164–253 (LTGL…RPPD). Acidic residues predominate over residues 113–124 (EDSQEEEEEDEE). Phosphoserine is present on Ser115. Polar residues predominate over residues 164 to 176 (LTGLDETTPTSTR). Residues Ser182 and Ser192 each carry the phosphoserine modification. Over residues 194-205 (LAKRLKPLKVRR) the composition is skewed to basic residues. Positions 206–217 (IKSEKLHLKDFR) are enriched in basic and acidic residues. Over residues 224-238 (NVPPPSIEPLTPPPQ) the composition is skewed to pro residues. The span at 242–253 (VQEKAPDTRPPD) shows a compositional bias: basic and acidic residues.

Its subcellular location is the membrane. The chain is Transmembrane protein 51 (TMEM51) from Homo sapiens (Human).